The sequence spans 122 residues: Large ribosomal subunit protein uL14c (122 aa).

It belongs to the universal ribosomal protein uL14 family. Part of the 50S ribosomal subunit.

The protein localises to the plastid. The protein resides in the chloroplast. Its function is as follows. Binds to 23S rRNA. The sequence is that of Large ribosomal subunit protein uL14c from Phalaenopsis aphrodite subsp. formosana (Moth orchid).